The primary structure comprises 506 residues: Photosystem II CP47 reaction center protein (506 aa).

6 helical membrane-spanning segments follow: residues 21 to 36 (SVHI…WAGS), 101 to 115 (ILFS…IWHW), 140 to 156 (GIHL…FGAF), 203 to 218 (IAAG…FHLS), 237 to 252 (VLSS…AFVV), and 457 to 472 (SFAL…HGAR).

The protein belongs to the PsbB/PsbC family. PsbB subfamily. PSII is composed of 1 copy each of membrane proteins PsbA, PsbB, PsbC, PsbD, PsbE, PsbF, PsbH, PsbI, PsbJ, PsbK, PsbL, PsbM, PsbT, PsbX, PsbY, PsbZ, Psb30/Ycf12, at least 3 peripheral proteins of the oxygen-evolving complex and a large number of cofactors. It forms dimeric complexes. It depends on Binds multiple chlorophylls. PSII binds additional chlorophylls, carotenoids and specific lipids. as a cofactor.

The protein localises to the plastid. It is found in the chloroplast thylakoid membrane. One of the components of the core complex of photosystem II (PSII). It binds chlorophyll and helps catalyze the primary light-induced photochemical processes of PSII. PSII is a light-driven water:plastoquinone oxidoreductase, using light energy to abstract electrons from H(2)O, generating O(2) and a proton gradient subsequently used for ATP formation. This Cucumis sativus (Cucumber) protein is Photosystem II CP47 reaction center protein.